The sequence spans 104 residues: Large ribosomal subunit protein eL30 (104 aa).

Belongs to the eukaryotic ribosomal protein eL30 family.

The protein is Large ribosomal subunit protein eL30 (rpl30e) of Sulfolobus acidocaldarius (strain ATCC 33909 / DSM 639 / JCM 8929 / NBRC 15157 / NCIMB 11770).